The primary structure comprises 513 residues: CUGBP Elav-like family member 2 (513 aa).

3 RRM domains span residues 35–118 (IKMF…PADS), 127–207 (RKLF…FADT), and 428–506 (ANLF…LKRS).

This sequence belongs to the CELF/BRUNOL family.

It is found in the nucleus. Its subcellular location is the cytoplasm. RNA-binding protein implicated in the regulation of several post-transcriptional events. May be involved in pre-mRNA alternative splicing, mRNA translation repression and stability. The chain is CUGBP Elav-like family member 2 (celf2) from Xenopus tropicalis (Western clawed frog).